The primary structure comprises 301 residues: Ribosomal RNA large subunit methyltransferase F (301 aa).

This sequence belongs to the methyltransferase superfamily. METTL16/RlmF family.

It localises to the cytoplasm. It carries out the reaction adenosine(1618) in 23S rRNA + S-adenosyl-L-methionine = N(6)-methyladenosine(1618) in 23S rRNA + S-adenosyl-L-homocysteine + H(+). Functionally, specifically methylates the adenine in position 1618 of 23S rRNA. This is Ribosomal RNA large subunit methyltransferase F from Colwellia psychrerythraea (strain 34H / ATCC BAA-681) (Vibrio psychroerythus).